The sequence spans 152 residues: Plant UBX domain-containing protein 12 (152 aa).

Positions 32-61 are disordered; the sequence is KRFSEEESEETENTTNSSNAVFGFPNLPEE. The 84-residue stretch at 67–150 folds into the UBX domain; it reads DQSVLCRICV…GLANSLVSVT (84 aa).

The polypeptide is Plant UBX domain-containing protein 12 (Arabidopsis thaliana (Mouse-ear cress)).